A 70-amino-acid chain; its full sequence is Protein SlyX homolog (70 aa).

The protein belongs to the SlyX family.

This is Protein SlyX homolog from Shewanella baltica (strain OS155 / ATCC BAA-1091).